Here is a 124-residue protein sequence, read N- to C-terminus: Small ribosomal subunit protein uS12 (124 aa).

A 3-methylthioaspartic acid modification is found at aspartate 89. Residues 103-124 (DTAGVKDRRQSRSKYGAKSPKE) are disordered.

The protein belongs to the universal ribosomal protein uS12 family. In terms of assembly, part of the 30S ribosomal subunit. Contacts proteins S8 and S17. May interact with IF1 in the 30S initiation complex.

With S4 and S5 plays an important role in translational accuracy. Functionally, interacts with and stabilizes bases of the 16S rRNA that are involved in tRNA selection in the A site and with the mRNA backbone. Located at the interface of the 30S and 50S subunits, it traverses the body of the 30S subunit contacting proteins on the other side and probably holding the rRNA structure together. The combined cluster of proteins S8, S12 and S17 appears to hold together the shoulder and platform of the 30S subunit. The chain is Small ribosomal subunit protein uS12 from Prochlorococcus marinus (strain NATL1A).